The following is an 85-amino-acid chain: RNA-binding protein KhpA (85 aa).

Positions 32 to 85 (YLEYNLTVNPEDIGRVIGRQGRVASAIRTIVYSVRVSGPKRVRLTIEDGQQKNS) constitute a KH domain.

It belongs to the KhpA RNA-binding protein family. In terms of assembly, forms a complex with KhpB.

It is found in the cytoplasm. In terms of biological role, a probable RNA chaperone. Forms a complex with KhpB which binds to cellular RNA and controls its expression. Plays a role in peptidoglycan (PG) homeostasis and cell length regulation. Its function is as follows. Necessary for correct cell elongation. The chain is RNA-binding protein KhpA from Lactiplantibacillus plantarum (strain ATCC BAA-793 / NCIMB 8826 / WCFS1) (Lactobacillus plantarum).